The following is a 227-amino-acid chain: Uracil-DNA glycosylase (227 aa).

Asp-64 functions as the Proton acceptor in the catalytic mechanism.

This sequence belongs to the uracil-DNA glycosylase (UDG) superfamily. UNG family.

The protein localises to the cytoplasm. It carries out the reaction Hydrolyzes single-stranded DNA or mismatched double-stranded DNA and polynucleotides, releasing free uracil.. In terms of biological role, excises uracil residues from the DNA which can arise as a result of misincorporation of dUMP residues by DNA polymerase or due to deamination of cytosine. This chain is Uracil-DNA glycosylase, found in Sodalis glossinidius (strain morsitans).